The primary structure comprises 525 residues: GMP synthase [glutamine-hydrolyzing] (525 aa).

A Glutamine amidotransferase type-1 domain is found at 16 to 205 (PVLVVDFGAQ…LHDFAGIGAR (190 aa)). The active-site Nucleophile is C93. Residues H179 and E181 contribute to the active site. Residues 206–399 (WTPANIANAL…LGLPEEIVAR (194 aa)) enclose the GMPS ATP-PPase domain. 233–239 (SGGVDSA) is a binding site for ATP.

In terms of assembly, homodimer.

The enzyme catalyses XMP + L-glutamine + ATP + H2O = GMP + L-glutamate + AMP + diphosphate + 2 H(+). Its pathway is purine metabolism; GMP biosynthesis; GMP from XMP (L-Gln route): step 1/1. In terms of biological role, catalyzes the synthesis of GMP from XMP. The sequence is that of GMP synthase [glutamine-hydrolyzing] from Mycobacterium marinum (strain ATCC BAA-535 / M).